Here is a 39-residue protein sequence, read N- to C-terminus: Contryphan-Cal4 (39 aa).

The N-terminal stretch at M1–S20 is a signal peptide. Residues C29 and C35 are joined by a disulfide bond.

In terms of tissue distribution, expressed by the venom duct.

The protein localises to the secreted. Functionally, probable neurotoxin. This chain is Contryphan-Cal4, found in Californiconus californicus (California cone).